Reading from the N-terminus, the 80-residue chain is uncharacterized protein (80 aa).

This is an uncharacterized protein from Acidianus filamentous virus 1 (isolate United States/Yellowstone) (AFV-1).